Consider the following 132-residue polypeptide: MCSAGELLRGGDGGERDEDGDALAEREAAGTGWDPGASPRRRGQRPKESEQDVEDSQNHTGEPVGDDYKKMGTLFGELNKNLINMGFTRMYFGERIVEPVIVIFFWVMLWFLGLQALGLVAVLCLVIIYVQQ.

The interval 1-68 (MCSAGELLRG…HTGEPVGDDY (68 aa)) is disordered. Residues 100-120 (VIVIFFWVMLWFLGLQALGLV) traverse the membrane as a helical segment.

Belongs to the FAM241 family.

It is found in the membrane. This is an uncharacterized protein from Homo sapiens (Human).